A 378-amino-acid chain; its full sequence is Sphingosine 1-phosphate receptor 3 (378 aa).

The Extracellular segment spans residues 1 to 40 (MATALPPRLQPVRGNETLREHYQYVGKLAGRLKEASEGST). N-linked (GlcNAc...) asparagine glycosylation is present at Asn15. Residues 41–65 (LTTVLFLVICSFIVLENLMVLIAIW) form a helical membrane-spanning segment. Residues 66 to 72 (KNNKFHN) lie on the Cytoplasmic side of the membrane. The chain crosses the membrane as a helical span at residues 73–101 (RMYFFIGNLALCDLLAGIAYKVNILMSGK). At 102-115 (KTFSLSPTVWFLRE) the chain is on the extracellular side. Residues 116 to 134 (GSMFVALGASTCSLLAIAI) traverse the membrane as a helical segment. Residues 135–153 (ERHLTMIKMRPYDANKRHR) are Cytoplasmic-facing. The helical transmembrane segment at 154–179 (VFLLIGMCWLIAFTLGALPILGWNCL) threads the bilayer. The Extracellular segment spans residues 180–195 (HNLPDCSTILPLYSKK). A helical membrane pass occupies residues 196–216 (YIAFCISIFTAILVTIVILYA). At 217–243 (RIYFLVKSSSRKVANHNNSERSMALLR) the chain is on the cytoplasmic side. The chain crosses the membrane as a helical span at residues 244–265 (TVVIVVSVFIACWSPLFILFLI). Residues 266–281 (DVACRVQACPILFKAQ) are Extracellular-facing. The chain crosses the membrane as a helical span at residues 282 to 302 (WFIVLAVLNSAMNPVIYTLAS). The Cytoplasmic segment spans residues 303-378 (KEMRRAFFRL…AALQNGIFCN (76 aa)). The residue at position 326 (Ser326) is a Phosphoserine. Positions 327 to 357 (PIQPALDPSRSKSSSSNNSSHSPKVKEDLPH) are disordered. A compositionally biased stretch (low complexity) spans 337 to 348 (SKSSSSNNSSHS).

The protein belongs to the G-protein coupled receptor 1 family. As to expression, expressed in all tissues, but most abundantly in heart, placenta, kidney, and liver.

The protein localises to the cell membrane. In terms of biological role, receptor for the lysosphingolipid sphingosine 1-phosphate (S1P). S1P is a bioactive lysophospholipid that elicits diverse physiological effect on most types of cells and tissues. When expressed in rat HTC4 hepatoma cells, is capable of mediating S1P-induced cell proliferation and suppression of apoptosis. The sequence is that of Sphingosine 1-phosphate receptor 3 from Homo sapiens (Human).